The sequence spans 238 residues: tRNA (guanine-N(7)-)-methyltransferase (238 aa).

S-adenosyl-L-methionine is bound by residues Glu-71, Glu-96, Asp-123, and Asp-146. Asp-146 is a catalytic residue. Residues Lys-150, Asp-182, and 217–220 contribute to the substrate site; that span reads TKFE.

This sequence belongs to the class I-like SAM-binding methyltransferase superfamily. TrmB family.

It carries out the reaction guanosine(46) in tRNA + S-adenosyl-L-methionine = N(7)-methylguanosine(46) in tRNA + S-adenosyl-L-homocysteine. It functions in the pathway tRNA modification; N(7)-methylguanine-tRNA biosynthesis. In terms of biological role, catalyzes the formation of N(7)-methylguanine at position 46 (m7G46) in tRNA. This chain is tRNA (guanine-N(7)-)-methyltransferase, found in Methylobacillus flagellatus (strain ATCC 51484 / DSM 6875 / VKM B-1610 / KT).